The chain runs to 104 residues: MEKYAFRMRLNPGMAEEYRARHDAIWPELVTLLKEAGISDYSIHLDEETGLLFGVLWRTENHTMADLPSHPVMQKWWAYMADIMETRADNEPVAVPLKTVFHLS.

Tyrosine 18 is a binding site for substrate. Histidine 22 (proton donor) is an active-site residue. Substrate is bound by residues tyrosine 41 and 76 to 77 (WW).

The protein belongs to the rhamnose mutarotase family. As to quaternary structure, homodimer.

It is found in the cytoplasm. The enzyme catalyses alpha-L-rhamnose = beta-L-rhamnose. It participates in carbohydrate metabolism; L-rhamnose metabolism. In terms of biological role, involved in the anomeric conversion of L-rhamnose. The polypeptide is L-rhamnose mutarotase (Sinorhizobium fredii (strain NBRC 101917 / NGR234)).